A 160-amino-acid chain; its full sequence is C-type lectin mosGCTL-1 (160 aa).

The first 20 residues, 1–20 (MLTKGITLILLLVLVHSSHG), serve as a signal peptide directing secretion. Residues 23–140 (TPNRKFYIPS…YHWSWNDNTC (118 aa)) form the C-type lectin domain. 2 disulfide bridges follow: Cys44–Cys140 and Cys120–Cys140. Asn76 carries an N-linked (GlcNAc...) asparagine glycan.

In terms of assembly, interacts with putative receptor-type tyrosine-protein phosphatase mosPTP-1; the interaction probably mediates the recruitment of West Nile virus particles in complex with C-type lectin mosGCTL-1 to the cell surface. (Microbial infection) Interacts with envelope protein E and virions of West Nile virus in a calcium-dependent manner. Female salivary gland (at protein level).

It is found in the secreted. Putative lectin. Its function is as follows. (Microbial infection) Facilitates West Nile virus infection in mosquitoes probably via capturing viral particles and presenting them to a ligand on the cell surface, thereby facilitating viral entry. This is C-type lectin mosGCTL-1 from Aedes aegypti (Yellowfever mosquito).